We begin with the raw amino-acid sequence, 194 residues long: Imidazoleglycerol-phosphate dehydratase (194 aa).

This sequence belongs to the imidazoleglycerol-phosphate dehydratase family.

The protein localises to the cytoplasm. The catalysed reaction is D-erythro-1-(imidazol-4-yl)glycerol 3-phosphate = 3-(imidazol-4-yl)-2-oxopropyl phosphate + H2O. Its pathway is amino-acid biosynthesis; L-histidine biosynthesis; L-histidine from 5-phospho-alpha-D-ribose 1-diphosphate: step 6/9. This chain is Imidazoleglycerol-phosphate dehydratase, found in Listeria monocytogenes serovar 1/2a (strain ATCC BAA-679 / EGD-e).